A 246-amino-acid chain; its full sequence is Proteasome subunit alpha type-6 (246 aa).

It belongs to the peptidase T1A family. In terms of assembly, the 26S proteasome consists of a 20S proteasome core and two 19S regulatory subunits. The 20S proteasome core is composed of 28 subunits that are arranged in four stacked rings, resulting in a barrel-shaped structure. The two end rings are each formed by seven alpha subunits, and the two central rings are each formed by seven beta subunits. The catalytic chamber with the active sites is on the inside of the barrel.

It localises to the cytoplasm. The protein resides in the nucleus. Its function is as follows. The proteasome is a multicatalytic proteinase complex which is characterized by its ability to cleave peptides with Arg, Phe, Tyr, Leu, and Glu adjacent to the leaving group at neutral or slightly basic pH. The proteasome has an ATP-dependent proteolytic activity. The sequence is that of Proteasome subunit alpha type-6 (PAA1) from Nicotiana tabacum (Common tobacco).